The primary structure comprises 202 residues: Na(+)-translocating NADH-quinone reductase subunit E (202 aa).

6 helical membrane-spanning segments follow: residues 11 to 31 (SVFI…FLAM), 35 to 55 (INAA…TVPA), 81 to 101 (FLSF…MEMV), 114 to 134 (GVFL…LFMV), 144 to 164 (VVYG…LAGI), and 180 to 200 (LGIT…FGGI).

Belongs to the NqrDE/RnfAE family. In terms of assembly, composed of six subunits; NqrA, NqrB, NqrC, NqrD, NqrE and NqrF.

The protein localises to the cell inner membrane. The catalysed reaction is a ubiquinone + n Na(+)(in) + NADH + H(+) = a ubiquinol + n Na(+)(out) + NAD(+). Functionally, NQR complex catalyzes the reduction of ubiquinone-1 to ubiquinol by two successive reactions, coupled with the transport of Na(+) ions from the cytoplasm to the periplasm. NqrA to NqrE are probably involved in the second step, the conversion of ubisemiquinone to ubiquinol. In Cellvibrio japonicus (strain Ueda107) (Pseudomonas fluorescens subsp. cellulosa), this protein is Na(+)-translocating NADH-quinone reductase subunit E.